The sequence spans 911 residues: Protein translocase subunit SecA (911 aa).

ATP is bound by residues Gln87, 105–109 (GEGKT), and Asp512. The disordered stretch occupies residues 861 to 893 (APGLESEQLSEEGAEVAVASAPVRNDQKLGRNE). Residues Cys895, Cys897, Cys906, and His907 each contribute to the Zn(2+) site.

It belongs to the SecA family. Monomer and homodimer. Part of the essential Sec protein translocation apparatus which comprises SecA, SecYEG and auxiliary proteins SecDF-YajC and YidC. Zn(2+) is required as a cofactor.

Its subcellular location is the cell inner membrane. The protein resides in the cytoplasm. It catalyses the reaction ATP + H2O + cellular proteinSide 1 = ADP + phosphate + cellular proteinSide 2.. Functionally, part of the Sec protein translocase complex. Interacts with the SecYEG preprotein conducting channel. Has a central role in coupling the hydrolysis of ATP to the transfer of proteins into and across the cell membrane, serving both as a receptor for the preprotein-SecB complex and as an ATP-driven molecular motor driving the stepwise translocation of polypeptide chains across the membrane. This is Protein translocase subunit SecA from Pseudomonas putida (strain ATCC 700007 / DSM 6899 / JCM 31910 / BCRC 17059 / LMG 24140 / F1).